Consider the following 510-residue polypeptide: Peptide transporter imqJ (510 aa).

3 consecutive transmembrane segments (helical) span residues 1 to 21, 31 to 51, and 57 to 77; these read MVNQ…AVVA, IIFS…SSLP, and GISL…TGGI. Asn-80 carries N-linked (GlcNAc...) asparagine glycosylation. 4 consecutive transmembrane segments (helical) span residues 116 to 136, 143 to 163, 231 to 251, and 269 to 289; these read IFTT…LITI, FSAA…IVLV, IFIL…NFIS, and IDPI…FPFL. The region spanning 348 to 468 is the Fe2OG dioxygenase domain; it reads PAASEIRLLY…RCSSVFFFKA (121 aa). Residues His-377 and Asp-379 each coordinate Fe cation. Asn-421 carries an N-linked (GlcNAc...) asparagine glycan. Residue His-439 participates in Fe cation binding. Residue Arg-459 participates in 2-oxoglutarate binding.

This sequence belongs to the major facilitator superfamily. Proton-dependent oligopeptide transporter (POT/PTR) (TC 2.A.17) family.

Its subcellular location is the membrane. In terms of biological role, peptide transporter; part of the gene cluster that mediates the biosynthesis of imizoquins A to D, tripeptide-derived alkaloids that serve a protective role against oxidative stress that are essential for normal germination. The chain is Peptide transporter imqJ from Aspergillus flavus (strain ATCC 200026 / FGSC A1120 / IAM 13836 / NRRL 3357 / JCM 12722 / SRRC 167).